The chain runs to 201 residues: Pyridoxal 5'-phosphate synthase subunit PdxT (201 aa).

51-53 provides a ligand contact to L-glutamine; that stretch reads GES. Cysteine 83 serves as the catalytic Nucleophile. Residues arginine 112 and 141–142 each bind L-glutamine; that span reads IR. Active-site charge relay system residues include histidine 182 and glutamate 184.

The protein belongs to the glutaminase PdxT/SNO family. As to quaternary structure, in the presence of PdxS, forms a dodecamer of heterodimers. Only shows activity in the heterodimer.

It catalyses the reaction aldehydo-D-ribose 5-phosphate + D-glyceraldehyde 3-phosphate + L-glutamine = pyridoxal 5'-phosphate + L-glutamate + phosphate + 3 H2O + H(+). It carries out the reaction L-glutamine + H2O = L-glutamate + NH4(+). It participates in cofactor biosynthesis; pyridoxal 5'-phosphate biosynthesis. Its function is as follows. Catalyzes the hydrolysis of glutamine to glutamate and ammonia as part of the biosynthesis of pyridoxal 5'-phosphate. The resulting ammonia molecule is channeled to the active site of PdxS. The protein is Pyridoxal 5'-phosphate synthase subunit PdxT of Thermobifida fusca (strain YX).